The chain runs to 190 residues: Segregation and condensation protein B (190 aa).

This sequence belongs to the ScpB family. Homodimer. Homodimerization may be required to stabilize the binding of ScpA to the Smc head domains. Component of a cohesin-like complex composed of ScpA, ScpB and the Smc homodimer, in which ScpA and ScpB bind to the head domain of Smc. The presence of the three proteins is required for the association of the complex with DNA.

It is found in the cytoplasm. Functionally, participates in chromosomal partition during cell division. May act via the formation of a condensin-like complex containing Smc and ScpA that pull DNA away from mid-cell into both cell halves. The polypeptide is Segregation and condensation protein B (Bacillus cereus (strain ATCC 14579 / DSM 31 / CCUG 7414 / JCM 2152 / NBRC 15305 / NCIMB 9373 / NCTC 2599 / NRRL B-3711)).